The primary structure comprises 462 residues: Argininosuccinate lyase (462 aa).

The protein belongs to the lyase 1 family. Argininosuccinate lyase subfamily.

It localises to the cytoplasm. The enzyme catalyses 2-(N(omega)-L-arginino)succinate = fumarate + L-arginine. Its pathway is amino-acid biosynthesis; L-arginine biosynthesis; L-arginine from L-ornithine and carbamoyl phosphate: step 3/3. The sequence is that of Argininosuccinate lyase from Bacillus cereus (strain ATCC 10987 / NRS 248).